The chain runs to 104 residues: Protein KleF (104 aa).

This Escherichia coli protein is Protein KleF (kleF).